The sequence spans 557 residues: 2-succinyl-5-enolpyruvyl-6-hydroxy-3-cyclohexene-1-carboxylate synthase (557 aa).

Belongs to the TPP enzyme family. MenD subfamily. Homodimer. Requires Mg(2+) as cofactor. Mn(2+) is required as a cofactor. The cofactor is thiamine diphosphate.

The catalysed reaction is isochorismate + 2-oxoglutarate + H(+) = 5-enolpyruvoyl-6-hydroxy-2-succinyl-cyclohex-3-ene-1-carboxylate + CO2. The protein operates within quinol/quinone metabolism; 1,4-dihydroxy-2-naphthoate biosynthesis; 1,4-dihydroxy-2-naphthoate from chorismate: step 2/7. It participates in quinol/quinone metabolism; menaquinone biosynthesis. In terms of biological role, catalyzes the thiamine diphosphate-dependent decarboxylation of 2-oxoglutarate and the subsequent addition of the resulting succinic semialdehyde-thiamine pyrophosphate anion to isochorismate to yield 2-succinyl-5-enolpyruvyl-6-hydroxy-3-cyclohexene-1-carboxylate (SEPHCHC). In Staphylococcus aureus (strain MRSA252), this protein is 2-succinyl-5-enolpyruvyl-6-hydroxy-3-cyclohexene-1-carboxylate synthase.